The following is a 330-amino-acid chain: Taste receptor type 2 member 136 (330 aa).

Residues 1 to 32 are Extracellular-facing; the sequence is MKSQPVTQELHFIFPLFKTISSDIMSFLVSIA. A helical transmembrane segment spans residues 33-53; sequence GIAMLAQIVLGTFANVFIVLV. Topologically, residues 54-73 are cytoplasmic; sequence TCTDCIRRRKLFLADGILTS. The chain crosses the membrane as a helical span at residues 74-94; that stretch reads LAFCRIGMLWVILISWCSIVF. Residues 95-122 are Extracellular-facing; the sequence is HQALSLQVRFSICVGWAVTNHFNMWLAT. Residues 123-143 form a helical membrane-spanning segment; it reads ILSILYLLKIGNFSNLIFLGL. Residues 144-149 are Cytoplasmic-facing; the sequence is KRKIKS. A helical transmembrane segment spans residues 150-170; that stretch reads VFIVVLLASLVLLFPNLITVT. The Extracellular portion of the chain corresponds to 171–201; that stretch reads VCETVQANGYRGNLTGKTKRTYFMNLTAMIS. N-linked (GlcNAc...) asparagine glycosylation is found at Asn183 and Asn195. Residues 202–222 traverse the membrane as a helical segment; the sequence is FTLDNIISFTISMVCFLLLIY. The Cytoplasmic segment spans residues 223–248; it reads SLCKHLRTMRLYGKGPHNPSASAHIK. Residues 249–269 traverse the membrane as a helical segment; the sequence is ALQAVISFLLLFSMFILSLII. Residues 270-283 are Extracellular-facing; it reads SGYNYMKPLNEPVH. The helical transmembrane segment at 284–304 threads the bilayer; the sequence is LICQLIGTLYPSSHSYVLLWG. Topologically, residues 305 to 330 are cytoplasmic; it reads NRRIKLAFVLAMVQVRARLWLKEEKP.

It belongs to the G-protein coupled receptor T2R family.

Its subcellular location is the membrane. In terms of biological role, putative taste receptor which may play a role in the perception of bitterness. This chain is Taste receptor type 2 member 136, found in Rattus norvegicus (Rat).